Here is a 346-residue protein sequence, read N- to C-terminus: Putative isoaspartyl peptidase/L-asparaginase (346 aa).

T207 acts as the Nucleophile in catalysis. Residues 235 to 238 and 257 to 260 contribute to the substrate site; these read RVGD and TGTG.

This sequence belongs to the Ntn-hydrolases family. Heterodimer of an alpha and beta chain produced by autocleavage. Cleaved into an alpha and beta chain by autocatalysis; this activates the enzyme. The N-terminal residue of the beta subunit is responsible for the nucleophile hydrolase activity.

It catalyses the reaction Cleavage of a beta-linked Asp residue from the N-terminus of a polypeptide.. The enzyme catalyses L-asparagine + H2O = L-aspartate + NH4(+). Its function is as follows. Has both L-asparaginase and beta-aspartyl peptidase activity. Does not have aspartylglucosaminidase activity and is inactive toward GlcNAc-L-Asn. Likewise, has no activity toward glutamine. The chain is Putative isoaspartyl peptidase/L-asparaginase from Dictyostelium discoideum (Social amoeba).